The following is a 143-amino-acid chain: Large ribosomal subunit protein uL11 (143 aa).

This sequence belongs to the universal ribosomal protein uL11 family. As to quaternary structure, part of the ribosomal stalk of the 50S ribosomal subunit. Interacts with L10 and the large rRNA to form the base of the stalk. L10 forms an elongated spine to which L12 dimers bind in a sequential fashion forming a multimeric L10(L12)X complex. One or more lysine residues are methylated.

Functionally, forms part of the ribosomal stalk which helps the ribosome interact with GTP-bound translation factors. The chain is Large ribosomal subunit protein uL11 from Herminiimonas arsenicoxydans.